We begin with the raw amino-acid sequence, 287 residues long: Phosphatidylserine decarboxylase proenzyme (287 aa).

Residues Asp89, His146, and Ser252 each act as charge relay system; for autoendoproteolytic cleavage activity in the active site. The Schiff-base intermediate with substrate; via pyruvic acid; for decarboxylase activity role is filled by Ser252. At Ser252 the chain carries Pyruvic acid (Ser); by autocatalysis.

The protein belongs to the phosphatidylserine decarboxylase family. PSD-B subfamily. Prokaryotic type I sub-subfamily. As to quaternary structure, heterodimer of a large membrane-associated beta subunit and a small pyruvoyl-containing alpha subunit. Pyruvate serves as cofactor. Post-translationally, is synthesized initially as an inactive proenzyme. Formation of the active enzyme involves a self-maturation process in which the active site pyruvoyl group is generated from an internal serine residue via an autocatalytic post-translational modification. Two non-identical subunits are generated from the proenzyme in this reaction, and the pyruvate is formed at the N-terminus of the alpha chain, which is derived from the carboxyl end of the proenzyme. The autoendoproteolytic cleavage occurs by a canonical serine protease mechanism, in which the side chain hydroxyl group of the serine supplies its oxygen atom to form the C-terminus of the beta chain, while the remainder of the serine residue undergoes an oxidative deamination to produce ammonia and the pyruvoyl prosthetic group on the alpha chain. During this reaction, the Ser that is part of the protease active site of the proenzyme becomes the pyruvoyl prosthetic group, which constitutes an essential element of the active site of the mature decarboxylase.

The protein localises to the cell membrane. The enzyme catalyses a 1,2-diacyl-sn-glycero-3-phospho-L-serine + H(+) = a 1,2-diacyl-sn-glycero-3-phosphoethanolamine + CO2. The protein operates within phospholipid metabolism; phosphatidylethanolamine biosynthesis; phosphatidylethanolamine from CDP-diacylglycerol: step 2/2. Catalyzes the formation of phosphatidylethanolamine (PtdEtn) from phosphatidylserine (PtdSer). The polypeptide is Phosphatidylserine decarboxylase proenzyme (Shewanella pealeana (strain ATCC 700345 / ANG-SQ1)).